Consider the following 126-residue polypeptide: Glycine cleavage system H protein (126 aa).

The Lipoyl-binding domain maps to 23 to 104 (TLTVGITDHA…PYDNWLFKIK (82 aa)). The residue at position 64 (lysine 64) is an N6-lipoyllysine.

This sequence belongs to the GcvH family. In terms of assembly, the glycine cleavage system is composed of four proteins: P, T, L and H. The cofactor is (R)-lipoate.

Functionally, the glycine cleavage system catalyzes the degradation of glycine. The H protein shuttles the methylamine group of glycine from the P protein to the T protein. This Paraburkholderia phymatum (strain DSM 17167 / CIP 108236 / LMG 21445 / STM815) (Burkholderia phymatum) protein is Glycine cleavage system H protein.